Here is a 191-residue protein sequence, read N- to C-terminus: Holliday junction branch migration complex subunit RuvA (191 aa).

The domain I stretch occupies residues Met1–Thr64. Residues Asp65 to Ser145 are domain II. The interval Val146–Ser149 is flexible linker. The domain III stretch occupies residues Ser149–Lys191.

It belongs to the RuvA family. In terms of assembly, homotetramer. Forms an RuvA(8)-RuvB(12)-Holliday junction (HJ) complex. HJ DNA is sandwiched between 2 RuvA tetramers; dsDNA enters through RuvA and exits via RuvB. An RuvB hexamer assembles on each DNA strand where it exits the tetramer. Each RuvB hexamer is contacted by two RuvA subunits (via domain III) on 2 adjacent RuvB subunits; this complex drives branch migration. In the full resolvosome a probable DNA-RuvA(4)-RuvB(12)-RuvC(2) complex forms which resolves the HJ.

The protein resides in the cytoplasm. Functionally, the RuvA-RuvB-RuvC complex processes Holliday junction (HJ) DNA during genetic recombination and DNA repair, while the RuvA-RuvB complex plays an important role in the rescue of blocked DNA replication forks via replication fork reversal (RFR). RuvA specifically binds to HJ cruciform DNA, conferring on it an open structure. The RuvB hexamer acts as an ATP-dependent pump, pulling dsDNA into and through the RuvAB complex. HJ branch migration allows RuvC to scan DNA until it finds its consensus sequence, where it cleaves and resolves the cruciform DNA. In Anaplasma phagocytophilum (strain HZ), this protein is Holliday junction branch migration complex subunit RuvA.